The chain runs to 409 residues: Toluene 1,2-dioxygenase system ferredoxin--NAD(+) reductase component (409 aa).

FAD is bound at residue 4 to 35 (HVAIIGNGVGGFTTAQALRAEGFEGRISLIGD). 145-173 (RLLIVGGGLIGCEVATTARKLGLSVTILE) provides a ligand contact to NAD(+).

The protein belongs to the bacterial ring-hydroxylating dioxygenase ferredoxin reductase family. As to quaternary structure, this dioxygenase system consists of four proteins: the two subunits of the hydroxylase component (todC1 and todC2), a ferredoxin (TodB) and a ferredoxin reductase (TodA). It depends on FAD as a cofactor.

The enzyme catalyses 2 reduced [2Fe-2S]-[ferredoxin] + NAD(+) + H(+) = 2 oxidized [2Fe-2S]-[ferredoxin] + NADH. Its pathway is xenobiotic degradation; toluene degradation. Part of the electron transfer component of toluene 1,2-dioxygenase, transfers electrons from ferredoxin (TodB) to NADH. This chain is Toluene 1,2-dioxygenase system ferredoxin--NAD(+) reductase component (todA), found in Pseudomonas putida (Arthrobacter siderocapsulatus).